A 322-amino-acid chain; its full sequence is 4-hydroxy-3-methylbut-2-enyl diphosphate reductase (322 aa).

Cysteine 15 provides a ligand contact to [4Fe-4S] cluster. (2E)-4-hydroxy-3-methylbut-2-enyl diphosphate contacts are provided by histidine 44 and histidine 77. Positions 44 and 77 each coordinate dimethylallyl diphosphate. 2 residues coordinate isopentenyl diphosphate: histidine 44 and histidine 77. A [4Fe-4S] cluster-binding site is contributed by cysteine 99. Residue histidine 127 coordinates (2E)-4-hydroxy-3-methylbut-2-enyl diphosphate. Dimethylallyl diphosphate is bound at residue histidine 127. Histidine 127 contributes to the isopentenyl diphosphate binding site. Glutamate 129 (proton donor) is an active-site residue. Threonine 168 is a binding site for (2E)-4-hydroxy-3-methylbut-2-enyl diphosphate. [4Fe-4S] cluster is bound at residue cysteine 198. 4 residues coordinate (2E)-4-hydroxy-3-methylbut-2-enyl diphosphate: serine 226, serine 227, asparagine 228, and serine 270. Positions 226, 227, 228, and 270 each coordinate dimethylallyl diphosphate. Isopentenyl diphosphate is bound by residues serine 226, serine 227, asparagine 228, and serine 270.

Belongs to the IspH family. The cofactor is [4Fe-4S] cluster.

It catalyses the reaction isopentenyl diphosphate + 2 oxidized [2Fe-2S]-[ferredoxin] + H2O = (2E)-4-hydroxy-3-methylbut-2-enyl diphosphate + 2 reduced [2Fe-2S]-[ferredoxin] + 2 H(+). The enzyme catalyses dimethylallyl diphosphate + 2 oxidized [2Fe-2S]-[ferredoxin] + H2O = (2E)-4-hydroxy-3-methylbut-2-enyl diphosphate + 2 reduced [2Fe-2S]-[ferredoxin] + 2 H(+). It functions in the pathway isoprenoid biosynthesis; dimethylallyl diphosphate biosynthesis; dimethylallyl diphosphate from (2E)-4-hydroxy-3-methylbutenyl diphosphate: step 1/1. The protein operates within isoprenoid biosynthesis; isopentenyl diphosphate biosynthesis via DXP pathway; isopentenyl diphosphate from 1-deoxy-D-xylulose 5-phosphate: step 6/6. Its function is as follows. Catalyzes the conversion of 1-hydroxy-2-methyl-2-(E)-butenyl 4-diphosphate (HMBPP) into a mixture of isopentenyl diphosphate (IPP) and dimethylallyl diphosphate (DMAPP). Acts in the terminal step of the DOXP/MEP pathway for isoprenoid precursor biosynthesis. This is 4-hydroxy-3-methylbut-2-enyl diphosphate reductase from Neisseria gonorrhoeae (strain ATCC 700825 / FA 1090).